The primary structure comprises 137 residues: Protein cornichon homolog 3 (137 aa).

3 helical membrane-spanning segments follow: residues 8-28, 54-74, and 113-133; these read IISF…LISL, ILQG…MALL, and LAYI…STLD.

This sequence belongs to the cornichon family.

It is found in the membrane. This chain is Protein cornichon homolog 3, found in Arabidopsis thaliana (Mouse-ear cress).